A 467-amino-acid chain; its full sequence is Retinoic acid receptor RXR-alpha (467 aa).

Positions 1–112 (MDTKHFLPLD…MNPVSSTEDI (112 aa)) are disordered. A modulating domain region spans residues 1 to 139 (MDTKHFLPLD…GNMASFTKHI (139 aa)). Residue K4 forms a Glycyl lysine isopeptide (Lys-Gly) (interchain with G-Cter in SUMO2) linkage. Positions 11-25 (FSTQVNSSSLNSPTG) are enriched in polar residues. S22 and S28 each carry phosphoserine. The segment covering 32 to 52 (PSLHPSLGPGIGSPLGSPGQL) has biased composition (low complexity). A compositionally biased stretch (polar residues) spans 54 to 63 (SPISTLSSPI). 2 positions are modified to phosphoserine; by MAPK8 and MAPK9: S61 and S75. The segment covering 83–109 (SVPTTPTLGFGTGSPQLNSPMNPVSST) has biased composition (polar residues). Phosphothreonine; by MAPK8 and MAPK9 is present on T87. Residue K113 forms a Glycyl lysine isopeptide (Lys-Gly) (interchain with G-Cter in SUMO) linkage. Residue S134 is modified to Phosphoserine. Zn(2+) contacts are provided by C140 and C143. Residues 140-160 (CAICGDRSSGKHYGVYSCEGC) form an NR C4-type zinc finger. Positions 140–205 (CAICGDRSSG…RYQKCLAMGM (66 aa)) form a DNA-binding region, nuclear receptor. K150 carries the post-translational modification N6-acetyllysine. Zn(2+) is bound by residues C157 and C160. Positions 165-170 (KRTVRK) are nuclear localization signal. Residues C176, C182, C192, and C195 each contribute to the Zn(2+) site. The NR C4-type zinc-finger motif lies at 176–200 (CRDNKDCLIDKRQRNRCQYCRYQKC). Residues 206 to 229 (KREAVQEERQRGKDRNENEVESTS) are hinge. Over residues 211–223 (QEERQRGKDRNEN) the composition is skewed to basic and acidic residues. Residues 211-233 (QEERQRGKDRNENEVESTSSANE) are disordered. An NR LBD domain is found at 232-463 (NEDMPVEKIL…TFLMEMLEAP (232 aa)). The residue at position 264 (S264) is a Phosphoserine. S265 carries the phosphoserine; by MAPK8 and MAPK9 modification. 2 residues coordinate 9-cis-retinoate: R321 and A332. Residues R321 and A332 each contribute to the all-trans-retinoate site. A required for nuclear export region spans residues 353–373 (RVLTELVSKMRDMQMDKTELG).

The protein belongs to the nuclear hormone receptor family. NR2 subfamily. Homodimer. Heterodimer with RARA; required for ligand-dependent retinoic acid receptor transcriptional activity. Heterodimer with PPARA (via the leucine-like zipper in the LBD); the interaction is required for PPARA transcriptional activity. Heterodimerizes with PPARG. Heterodimerizes (via NR LBD) with RARB. Heterodimerizes with NR1H4; the heterodimerization enhances the binding affinity for LXXLL motifs from coactivators. Interacts with coactivator NCO6. Interacts with coactivator NCO3. Interacts with coactivator FAM120B. Interacts with coactivator PELP1, SENP6, SFPQ, DNTTIP2 and RNF8. Interacts with PRMT2. Interacts with ASXL1. Interacts with BHLHE40/DEC1, BHLHE41/DEC2, NCOR1 and NCOR2. Interacts in a ligand-dependent fashion with MED1 and NCOA1. Interacts with VDR. Interacts with EP300; the interaction is decreased by 9-cis retinoic acid. Heterodimer (via C-terminus) with NR4A1 (via DNA-binding domain); the interaction is enhanced by 9-cis retinoic acid. NR4A1 competes with EP300 for interaction with RXRA and thereby attenuates EP300 mediated acetylation of RXRA. In the absence of hormonal ligand, interacts with TACC1. Interacts ith IGFBP3. In terms of processing, acetylated by EP300; acetylation enhances DNA binding and transcriptional activity. Phosphorylated on serine and threonine residues mainly in the N-terminal modulating domain. Constitutively phosphorylated on Ser-22 in the presence or absence of ligand. Under stress conditions, hyperphosphorylated by activated JNK on Ser-61, Ser-75, Thr-87 and Ser-265. Phosphorylated on Ser-28, in vitro, by PKA. This phosphorylation is required for repression of cAMP-mediated transcriptional activity of RARA. Post-translationally, ubiquitinated by UBR5, leading to its degradation: UBR5 specifically recognizes and binds ligand-bound RXRA when it is not associated with coactivators (NCOAs). In presence of NCOAs, the UBR5-degron is not accessible, preventing its ubiquitination and degradation. In terms of processing, sumoylation negatively regulates transcriptional activity. Desumoylated specifically by SENP6. Expressed in macrophages (at protein level).

Its subcellular location is the nucleus. The protein resides in the cytoplasm. It is found in the mitochondrion. Functionally, receptor for retinoic acid that acts as a transcription factor. Forms homo- or heterodimers with retinoic acid receptors (RARs) and binds to target response elements in response to their ligands, all-trans or 9-cis retinoic acid, to regulate gene expression in various biological processes. The RAR/RXR heterodimers bind to the retinoic acid response elements (RARE) composed of tandem 5'-AGGTCA-3' sites known as DR1-DR5 to regulate transcription. The high affinity ligand for retinoid X receptors (RXRs) is 9-cis retinoic acid. In the absence of ligand, the RXR-RAR heterodimers associate with a multiprotein complex containing transcription corepressors that induce histone deacetylation, chromatin condensation and transcriptional suppression. On ligand binding, the corepressors dissociate from the receptors and coactivators are recruited leading to transcriptional activation. Serves as a common heterodimeric partner for a number of nuclear receptors, such as RARA, RARB and PPARA. The RXRA/RARB heterodimer can act as a transcriptional repressor or transcriptional activator, depending on the RARE DNA element context. The RXRA/PPARA heterodimer is required for PPARA transcriptional activity on fatty acid oxidation genes such as ACOX1 and the P450 system genes. Together with RARA, positively regulates microRNA-10a expression, thereby inhibiting the GATA6/VCAM1 signaling response to pulsatile shear stress in vascular endothelial cells. Acts as an enhancer of RARA binding to RARE DNA element. May facilitate the nuclear import of heterodimerization partners such as VDR and NR4A1. Promotes myelin debris phagocytosis and remyelination by macrophages. Plays a role in the attenuation of the innate immune system in response to viral infections, possibly by negatively regulating the transcription of antiviral genes such as type I IFN genes. Involved in the regulation of calcium signaling by repressing ITPR2 gene expression, thereby controlling cellular senescence. In Mus musculus (Mouse), this protein is Retinoic acid receptor RXR-alpha (Rxra).